We begin with the raw amino-acid sequence, 264 residues long: MQAYLDLMAHVRHHGTPKSDRTGTGTLSVFGHQMRFDLSRGFPVVTTKKLHLRSIIHELLWFLSGDSNIAYLKANGVSIWDEWADENGDLGPIYGVQWRSWPTPDGRRVDQLAQVLRDLREHPDSRRHLVSAWNVGELPNMALPPCHTLFQFYVAEGRLSCQLYQRSADIFLGLPFNIASYALLTHMVAQVCDLKPGEFIWTGGDCHLYTNHLEQADRQLQREPLPLPRLRLNPEVRDLFAFRYEDIALEGYQHHPPIKAPVAV.

DUMP is bound at residue arginine 21. Residue histidine 51 participates in (6R)-5,10-methylene-5,6,7,8-tetrahydrofolate binding. 126 to 127 (RR) contributes to the dUMP binding site. Cysteine 146 acts as the Nucleophile in catalysis. Residues 166–169 (RSAD), asparagine 177, and 207–209 (HLY) each bind dUMP. Residue aspartate 169 coordinates (6R)-5,10-methylene-5,6,7,8-tetrahydrofolate. A (6R)-5,10-methylene-5,6,7,8-tetrahydrofolate-binding site is contributed by alanine 263.

Belongs to the thymidylate synthase family. Bacterial-type ThyA subfamily. Homodimer.

It localises to the cytoplasm. The catalysed reaction is dUMP + (6R)-5,10-methylene-5,6,7,8-tetrahydrofolate = 7,8-dihydrofolate + dTMP. Its pathway is pyrimidine metabolism; dTTP biosynthesis. In terms of biological role, catalyzes the reductive methylation of 2'-deoxyuridine-5'-monophosphate (dUMP) to 2'-deoxythymidine-5'-monophosphate (dTMP) while utilizing 5,10-methylenetetrahydrofolate (mTHF) as the methyl donor and reductant in the reaction, yielding dihydrofolate (DHF) as a by-product. This enzymatic reaction provides an intracellular de novo source of dTMP, an essential precursor for DNA biosynthesis. The polypeptide is Thymidylate synthase (Alkalilimnicola ehrlichii (strain ATCC BAA-1101 / DSM 17681 / MLHE-1)).